Reading from the N-terminus, the 122-residue chain is Acidic phospholipase A2 4 (122 aa).

7 cysteine pairs are disulfide-bonded: cysteine 26–cysteine 115, cysteine 28–cysteine 44, cysteine 43–cysteine 95, cysteine 49–cysteine 122, cysteine 50–cysteine 88, cysteine 57–cysteine 81, and cysteine 75–cysteine 86. Phenylalanine 27, glycine 29, and glycine 31 together coordinate Ca(2+). Histidine 47 is a catalytic residue. Aspartate 48 is a binding site for Ca(2+). Aspartate 89 is an active-site residue.

The protein belongs to the phospholipase A2 family. Group II subfamily. D49 sub-subfamily. It depends on Ca(2+) as a cofactor. Expressed by the venom gland.

It localises to the secreted. It carries out the reaction a 1,2-diacyl-sn-glycero-3-phosphocholine + H2O = a 1-acyl-sn-glycero-3-phosphocholine + a fatty acid + H(+). Its function is as follows. Snake venom phospholipase A2 (PLA2) that has high lipolytic activity. PLA2 catalyzes the calcium-dependent hydrolysis of the 2-acyl groups in 3-sn-phosphoglycerides. The chain is Acidic phospholipase A2 4 from Craspedocephalus gramineus (Bamboo pit viper).